The primary structure comprises 246 residues: Transcription factor MYB113 (246 aa).

HTH myb-type domains are found at residues 5 to 61 and 62 to 112; these read PKGL…KPSI and KRGK…SKKH. DNA-binding regions (H-T-H motif) lie at residues 33-57 and 85-108; these read WHRV…LNYL and WSLI…NTHL.

Interacts with BHLH002/EGL3/MYC146, BHLH012/MYC1 and BHLH042/TT8.

The protein localises to the nucleus. Its function is as follows. Transcription activator, when associated with BHLH002/EGL3/MYC146, BHLH012/MYC1, or BHLH042/TT8. The chain is Transcription factor MYB113 (MYB113) from Arabidopsis thaliana (Mouse-ear cress).